The following is a 428-amino-acid chain: Adenylosuccinate synthetase 1 (428 aa).

GTP is bound by residues 12–18 (GDEGKGK) and 40–42 (GHT). The active-site Proton acceptor is aspartate 13. Mg(2+) contacts are provided by aspartate 13 and glycine 40. IMP contacts are provided by residues 13 to 16 (DEGK), 38 to 41 (NAGH), threonine 133, arginine 147, asparagine 224, threonine 239, and arginine 303. Catalysis depends on histidine 41, which acts as the Proton donor. 299-305 (TTTGRRR) is a substrate binding site. GTP is bound by residues arginine 305, 331-333 (KLD), and 413-415 (GVG).

Belongs to the adenylosuccinate synthetase family. Homodimer. Requires Mg(2+) as cofactor.

The protein resides in the cytoplasm. The catalysed reaction is IMP + L-aspartate + GTP = N(6)-(1,2-dicarboxyethyl)-AMP + GDP + phosphate + 2 H(+). It functions in the pathway purine metabolism; AMP biosynthesis via de novo pathway; AMP from IMP: step 1/2. Its function is as follows. Plays an important role in the de novo pathway and in the salvage pathway of purine nucleotide biosynthesis. Catalyzes the first committed step in the biosynthesis of AMP from IMP. This is Adenylosuccinate synthetase 1 from Laccaria bicolor (strain S238N-H82 / ATCC MYA-4686) (Bicoloured deceiver).